A 205-amino-acid chain; its full sequence is Dr1-associated corepressor (205 aa).

Positions 14–77 constitute a Histone-fold domain; that stretch reads PARIKKIMQT…SHLKQCIELE (64 aa). The disordered stretch occupies residues 91–205; it reads PDMQGDGEDN…EAEDEEDYDS (115 aa). Residues 98 to 108 are compositionally biased toward basic and acidic residues; it reads EDNHTDGDKGP. Acidic residues predominate over residues 138-155; it reads SEQEDESEDTDTDGEEET. Residues 172 to 193 are compositionally biased toward pro residues; it reads PPTPFMPFTSPLPLPPAPPGPS. Positions 196–205 are enriched in acidic residues; it reads EAEDEEDYDS.

This sequence belongs to the NC2 alpha/DRAP1 family. In terms of assembly, heterodimer with DR1. Binds BTAF1. In terms of processing, phosphorylation reduces DNA binding, but has no effect on heterodimerization and TBP binding.

The protein resides in the nucleus. In terms of biological role, the association of the DR1/DRAP1 heterodimer with TBP results in a functional repression of both activated and basal transcription of class II genes. This interaction precludes the formation of a transcription-competent complex by inhibiting the association of TFIIA and/or TFIIB with TBP. Can bind to DNA on its own. The protein is Dr1-associated corepressor of Rattus norvegicus (Rat).